A 538-amino-acid chain; its full sequence is [Pyruvate dehydrogenase [acetyl-transferring]]-phosphatase 1, mitochondrial (538 aa).

The transit peptide at 1-71 directs the protein to the mitochondrion; sequence MPAPTQLFFP…WWQYTQGRRY (71 aa). The region spanning 109–525 is the PPM-type phosphatase domain; that stretch reads VLGFDSNQLP…DDITIIVVQF (417 aa). Residues aspartate 144 and glycine 145 each contribute to the Mn(2+) site. N6-acetyllysine is present on lysine 202. 2 residues coordinate Mn(2+): aspartate 418 and aspartate 516.

The protein belongs to the PP2C family. As to quaternary structure, heterodimer of a catalytic (PDP1) and a regulatory (PDPR) subunit. It depends on Mn(2+) as a cofactor. Mg(2+) is required as a cofactor.

The protein resides in the mitochondrion. It carries out the reaction O-phospho-L-seryl-[pyruvate dehydrogenase E1 alpha subunit] + H2O = L-seryl-[pyruvate dehydrogenase E1 alpha subunit] + phosphate. Its activity is regulated as follows. Magnesium-dependent and calcium-stimulated. PDP1 activity strongly depends on its Ca(2+)-dependent binding to the lipoyl domain of E2 subunit of component of the pyruvate dehydrogenase complex. Its function is as follows. Mitochondrial enzyme that catalyzes the dephosphorylation and concomitant reactivation of the alpha subunit of the E1 component of the pyruvate dehydrogenase complex (PDC), thereby stimulating the conversion of pyruvate into acetyl-CoA. This Bos taurus (Bovine) protein is [Pyruvate dehydrogenase [acetyl-transferring]]-phosphatase 1, mitochondrial (PDP1).